Consider the following 509-residue polypeptide: Cardiolipin synthase 1 (509 aa).

Helical transmembrane passes span 4–24 (PIVQ…LLNT), 30–50 (YTFV…VIFI), and 59–79 (LAWF…YAIF). 2 PLD phosphodiesterase domains span residues 238–265 (VNYR…GDEY) and 422–449 (KDGF…DVRS). Active-site residues include H243, K245, D250, H427, K429, and D434.

This sequence belongs to the phospholipase D family. Cardiolipin synthase subfamily.

It is found in the cell membrane. The catalysed reaction is 2 a 1,2-diacyl-sn-glycero-3-phospho-(1'-sn-glycerol) = a cardiolipin + glycerol. Functionally, catalyzes the reversible phosphatidyl group transfer from one phosphatidylglycerol molecule to another to form cardiolipin (CL) (diphosphatidylglycerol) and glycerol. The chain is Cardiolipin synthase 1 (cls1) from Bacillus cereus (strain ATCC 14579 / DSM 31 / CCUG 7414 / JCM 2152 / NBRC 15305 / NCIMB 9373 / NCTC 2599 / NRRL B-3711).